We begin with the raw amino-acid sequence, 1386 residues long: Lysophospholipase NTE1 (1386 aa).

Over 1-19 the chain is Cytoplasmic; sequence MGPEFEDSIPLVHSDNRTT. The chain crosses the membrane as a helical span at residues 20 to 40; sequence TIYSVYIIISDIFSFVQWLLF. Topologically, residues 41–65 are lumenal; it reads KVLNLIIIDSPAFVLRLLSKNFEIN. The chain crosses the membrane as a helical span at residues 66 to 86; that stretch reads LHLSSILATLIGVSVVTYLVI. Topologically, residues 87 to 1386 are cytoplasmic; that stretch reads RYKFLTGYSH…KKILYRRNSI (1300 aa). The segment at 394–416 is disordered; sequence EAEAENLPKKLKHHHRNQLQRTT. The span at 402–411 shows a compositional bias: basic residues; the sequence is KKLKHHHRNQ. Residues 577–701 and 697–821 each bind a nucleoside 3',5'-cyclic phosphate; these read KRLL…LKNL and KLKN…VASK. The PNPLA domain maps to 1081 to 1245; sequence LVLGGGGSRG…LDNLPVNEMK (165 aa). Positions 1085–1090 match the GXGXXG motif; the sequence is GGGSRG. The GXSXG signature appears at 1112–1116; the sequence is GTSIG. The active-site Nucleophile is the Ser-1114. Catalysis depends on Asp-1232, which acts as the Proton acceptor. A DGA/G motif is present at residues 1232 to 1234; that stretch reads DGG.

Belongs to the NTE family.

It localises to the endoplasmic reticulum membrane. It catalyses the reaction a 1-acyl-sn-glycero-3-phosphocholine + H2O = sn-glycerol 3-phosphocholine + a fatty acid + H(+). With respect to regulation, inhibited by organophosphorus esters. Intracellular phospholipase B that catalyzes the double deacylation of phosphatidylcholine (PC) to glycerophosphocholine (GroPCho). Plays an important role in membrane lipid homeostasis. Responsible for the rapid PC turnover in response to inositol, elevated temperatures, or when choline is present in the growth medium. The polypeptide is Lysophospholipase NTE1 (NTE1) (Candida albicans (strain SC5314 / ATCC MYA-2876) (Yeast)).